Reading from the N-terminus, the 105-residue chain is Urease subunit beta (105 aa).

This sequence belongs to the urease beta subunit family. As to quaternary structure, heterotrimer of UreA (gamma), UreB (beta) and UreC (alpha) subunits. Three heterotrimers associate to form the active enzyme.

Its subcellular location is the cytoplasm. It catalyses the reaction urea + 2 H2O + H(+) = hydrogencarbonate + 2 NH4(+). It participates in nitrogen metabolism; urea degradation; CO(2) and NH(3) from urea (urease route): step 1/1. This Mycobacterium sp. (strain JLS) protein is Urease subunit beta.